The following is a 215-amino-acid chain: Large ribosomal subunit protein uL16 (215 aa).

This sequence belongs to the universal ribosomal protein uL16 family. Component of the small ribosomal subunit. Mature ribosomes consist of a small (40S) and a large (60S) subunit. The 40S subunit contains about 33 different proteins and 1 molecule of RNA (18S). The 60S subunit contains about 49 different proteins and 3 molecules of RNA (25S, 5.8S and 5S).

The protein is Large ribosomal subunit protein uL16 (RPL10) of Euglena gracilis.